Reading from the N-terminus, the 476-residue chain is CBL-interacting protein kinase 30 (476 aa).

The region spanning 17–272 is the Protein kinase domain; it reads YKLGRLLGRG…ISKIMDRPWF (256 aa). ATP is bound by residues 23-31 and Lys46; that span reads LGRGTFAKV. Asp140 functions as the Proton acceptor in the catalytic mechanism. Positions 158–187 are activation loop; it reads DFGLSALDGGLRGDGLLHTTCGTPAYVAPE. The tract at residues 296 to 315 is disordered; the sequence is KEASQQHDDEEDDGFAREKK. The NAF domain occupies 299-353; it reads SQQHDDEEDDGFAREKKKRSNVIMSSPVIDVRPSSMNAFDIISRSRGLDLSKMFD. The segment at 358-387 is PPI; that stretch reads RSEARFSTRETTTAIVSKLEEIAEAGRFSF.

Belongs to the protein kinase superfamily. CAMK Ser/Thr protein kinase family. SNF1 subfamily. Mn(2+) is required as a cofactor.

The enzyme catalyses L-seryl-[protein] + ATP = O-phospho-L-seryl-[protein] + ADP + H(+). It carries out the reaction L-threonyl-[protein] + ATP = O-phospho-L-threonyl-[protein] + ADP + H(+). CIPK serine-threonine protein kinases interact with CBL proteins. Binding of a CBL protein to the regulatory NAF domain of CIPK protein lead to the activation of the kinase in a calcium-dependent manner. This chain is CBL-interacting protein kinase 30 (CIPK30), found in Oryza sativa subsp. japonica (Rice).